The chain runs to 431 residues: 23S rRNA (uracil(1939)-C(5))-methyltransferase RlmD (431 aa).

The 59-residue stretch at 10 to 68 folds into the TRAM domain; that stretch reads RVTTRQIITVKVNDLDSFGQGVARHNGKALFIPGLLPEESAEVIITEDKKQFARARVSR. Cys-81, Cys-87, Cys-90, and Cys-161 together coordinate [4Fe-4S] cluster. Gln-264, Phe-293, Asn-298, Glu-314, Asn-341, and Asp-362 together coordinate S-adenosyl-L-methionine. The active-site Nucleophile is the Cys-388.

Belongs to the class I-like SAM-binding methyltransferase superfamily. RNA M5U methyltransferase family. RlmD subfamily.

It catalyses the reaction uridine(1939) in 23S rRNA + S-adenosyl-L-methionine = 5-methyluridine(1939) in 23S rRNA + S-adenosyl-L-homocysteine + H(+). Its function is as follows. Catalyzes the formation of 5-methyl-uridine at position 1939 (m5U1939) in 23S rRNA. In Salmonella typhimurium (strain LT2 / SGSC1412 / ATCC 700720), this protein is 23S rRNA (uracil(1939)-C(5))-methyltransferase RlmD.